We begin with the raw amino-acid sequence, 61 residues long: Large ribosomal subunit protein uL30 (61 aa).

It belongs to the universal ribosomal protein uL30 family. As to quaternary structure, part of the 50S ribosomal subunit.

This chain is Large ribosomal subunit protein uL30, found in Francisella philomiragia subsp. philomiragia (strain ATCC 25017 / CCUG 19701 / FSC 153 / O#319-036).